The primary structure comprises 299 residues: Phosphatidylserine decarboxylase proenzyme (299 aa).

Active-site charge relay system; for autoendoproteolytic cleavage activity residues include Asp-115, His-171, and Ser-258. Catalysis depends on Ser-258, which acts as the Schiff-base intermediate with substrate; via pyruvic acid; for decarboxylase activity. The residue at position 258 (Ser-258) is a Pyruvic acid (Ser); by autocatalysis.

The protein belongs to the phosphatidylserine decarboxylase family. PSD-B subfamily. Prokaryotic type II sub-subfamily. Heterodimer of a large membrane-associated beta subunit and a small pyruvoyl-containing alpha subunit. Pyruvate is required as a cofactor. In terms of processing, is synthesized initially as an inactive proenzyme. Formation of the active enzyme involves a self-maturation process in which the active site pyruvoyl group is generated from an internal serine residue via an autocatalytic post-translational modification. Two non-identical subunits are generated from the proenzyme in this reaction, and the pyruvate is formed at the N-terminus of the alpha chain, which is derived from the carboxyl end of the proenzyme. The autoendoproteolytic cleavage occurs by a canonical serine protease mechanism, in which the side chain hydroxyl group of the serine supplies its oxygen atom to form the C-terminus of the beta chain, while the remainder of the serine residue undergoes an oxidative deamination to produce ammonia and the pyruvoyl prosthetic group on the alpha chain. During this reaction, the Ser that is part of the protease active site of the proenzyme becomes the pyruvoyl prosthetic group, which constitutes an essential element of the active site of the mature decarboxylase.

It localises to the cell membrane. The enzyme catalyses a 1,2-diacyl-sn-glycero-3-phospho-L-serine + H(+) = a 1,2-diacyl-sn-glycero-3-phosphoethanolamine + CO2. Its pathway is phospholipid metabolism; phosphatidylethanolamine biosynthesis; phosphatidylethanolamine from CDP-diacylglycerol: step 2/2. Functionally, catalyzes the formation of phosphatidylethanolamine (PtdEtn) from phosphatidylserine (PtdSer). This Chlamydia felis (strain Fe/C-56) (Chlamydophila felis) protein is Phosphatidylserine decarboxylase proenzyme.